Consider the following 484-residue polypeptide: DNA-binding protein (484 aa).

The interval 1–69 is disordered; the sequence is MASNQHSQRE…ESAEEEEAEP (69 aa). Residues 51–60 show a composition bias toward low complexity; the sequence is SMAAIPLSPE. Tyr150 is modified (phosphotyrosine; by host). Cys239 and His241 together coordinate Zn(2+). The tract at residues 252–286 is flexible loop; sequence VEMDVTSESGQRALKENPSKAKVAQNRWGRNVVQI. Zn(2+) is bound by residues Cys294, Cys310, Cys351, Cys353, Cys405, and Cys421. Residues 468–484 are C-terminal arm, DBP binding; sequence ISLPTNHGDCREEPFDF.

Belongs to the adenoviridae E2A DNA-binding protein family. Homomultimerizes on viral ssDNA bound to pTP. Forms a initiation complex with viral polymerase, pTP and hosts NFIA and POU2F1/OCT1. Interacts with host SRCAP.

Its subcellular location is the host nucleus. Plays a role in the elongation phase of viral strand displacement replication by unwinding the template in an ATP-independent fashion, employing its capacity to form multimers. Also enhances the rate of initiation. Released from template upon second strand synthesis. Assembles in complex with viral pTP, viral pol, host NFIA and host POU2F1/OCT1 on viral origin of replication. Covers the whole ssDNA genome during synthesis. The complementary strand synthesis induces its relese from DNA template. May inhibit cellular transcription mediated by the interaction between host SRCAP and CBP. In Human adenovirus A serotype 12 (HAdV-12), this protein is DNA-binding protein.